Reading from the N-terminus, the 911-residue chain is DNA ligase 4 (911 aa).

ATP-binding residues include E271, T272, K273, L274, R278, E331, K345, F367, E427, K432, K449, and K451. K273 (N6-AMP-lysine intermediate) is an active-site residue. Residue E331 coordinates Mg(2+). A Mg(2+)-binding site is contributed by E427. Positions 610-620 (LATKHLHVGDD) are required for catalytic activity. BRCT domains follow at residues 654–743 (KVSN…PRFM) and 808–911 (SPLS…QYLL).

Belongs to the ATP-dependent DNA ligase family. As to quaternary structure, interacts with XRCC4; the LIG4-XRCC4 subcomplex has a 1:2 stoichiometry and XRCC4 is required for LIG4 stability. Component of the core long-range non-homologous end joining (NHEJ) complex (also named DNA-PK complex) composed of PRKDC, LIG4, XRCC4, XRCC6/Ku70, XRCC5/Ku86 and NHEJ1/XLF. Additional component of the NHEJ complex includes PAXX. Following autophosphorylation, PRKDC dissociates from DNA, leading to formation of the short-range NHEJ complex, composed of LIG4, XRCC4, XRCC6/Ku70, XRCC5/Ku86 and NHEJ1/XLF. Interacts with DCLRE1C; the interaction is direct. Interacts with APLF. Requires Mg(2+) as cofactor.

The protein resides in the nucleus. The catalysed reaction is ATP + (deoxyribonucleotide)n-3'-hydroxyl + 5'-phospho-(deoxyribonucleotide)m = (deoxyribonucleotide)n+m + AMP + diphosphate.. Functionally, DNA ligase involved in DNA non-homologous end joining (NHEJ); required for double-strand break (DSB) repair and V(D)J recombination. Catalyzes the NHEJ ligation step of the broken DNA during DSB repair by resealing the DNA breaks after the gap filling is completed. Joins single-strand breaks in a double-stranded polydeoxynucleotide in an ATP-dependent reaction. LIG4 is mechanistically flexible: it can ligate nicks as well as compatible DNA overhangs alone, while in the presence of XRCC4, it can ligate ends with 2-nucleotides (nt) microhomology and 1-nt gaps. Forms a subcomplex with XRCC4; the LIG4-XRCC4 subcomplex is responsible for the NHEJ ligation step and XRCC4 enhances the joining activity of LIG4. Binding of the LIG4-XRCC4 complex to DNA ends is dependent on the assembly of the DNA-dependent protein kinase complex DNA-PK to these DNA ends. LIG4 regulates nuclear localization of XRCC4. The protein is DNA ligase 4 of Mus musculus (Mouse).